A 134-amino-acid polypeptide reads, in one-letter code: Replication enhancer protein (134 aa).

Belongs to the geminiviridae replication enhancer protein family. In terms of assembly, homooligomer. Interacts with the replication-associated protein (REP). Interacts with host proliferating cell nuclear antigen (PCNA). Interacts with host retinoblastoma-related protein 1 (RBR1), and may thereby deregulate the host cell cycle. Oligomerization and interaction with PCNA are necessary for optimal replication enhancement.

Its function is as follows. Increases viral DNA accumulation. Enhances infectivity and symptom expression. This is Replication enhancer protein from African cassava mosaic virus (isolate West Kenyan 844) (ACMV).